The following is a 50-amino-acid chain: Fungus-induced protein 3 (50 aa).

The protein is Fungus-induced protein 3 (fip-3) of Caenorhabditis elegans.